The chain runs to 279 residues: Glycerol uptake facilitator protein (279 aa).

Residues 1-8 are Cytoplasmic-facing; that stretch reads MTTAAPTP. Residues 9–37 traverse the membrane as a helical segment; the sequence is SLFGQCLAEFLGTALLIFFGTGCVAALKV. Over 38 to 42 the chain is Periplasmic; that stretch reads AGASF. A helical membrane pass occupies residues 43–63; sequence GLWEISIIWGVGVSMAIYLSA. The Cytoplasmic segment spans residues 64-66; sequence GVS. An intramembrane segment occupies 67 to 70; sequence GAHL. Residues 71 to 73 carry the NPA 1 motif; it reads NPA. Positions 71–81 form an intramembrane region, helical; the sequence is NPAVSIALWLF. The Cytoplasmic portion of the chain corresponds to 82 to 87; the sequence is AGFEGR. A helical transmembrane segment spans residues 88–111; it reads KLPFYITAQVAGAFCAAALVYTLY. At 112–146 the chain is on the periplasmic side; it reads SSLFIEFEQAQNIVRGSQDSLALASVFSTYPHPAL. The helical transmembrane segment at 147 to 172 threads the bilayer; the sequence is SVGQAFLVEVVITAILMAVIMALTDD. Residues 173–180 lie on the Cytoplasmic side of the membrane; sequence GNGLPRGP. A helical transmembrane segment spans residues 181–197; that stretch reads LAPLLIGLLIAVIGSAM. The Periplasmic portion of the chain corresponds to 198–201; sequence GPLT. Residues 202–205 lie within the membrane without spanning it; it reads GFAM. Positions 206–208 match the NPA 2 motif; that stretch reads NPA. The helical intramembrane region spans 206–219; that stretch reads NPARDFGPKLMTYL. Over 220-234 the chain is Periplasmic; sequence AGWGPIAFTGGREIP. The chain crosses the membrane as a helical span at residues 235–257; that stretch reads YFLVPIFAPILGACLGAGGYRVL. The Cytoplasmic segment spans residues 258–279; it reads IARHLPSAAAPAEAEPEKVRAS.

This sequence belongs to the MIP/aquaporin (TC 1.A.8) family.

It localises to the cell inner membrane. The catalysed reaction is glycerol(in) = glycerol(out). Its function is as follows. Mediates glycerol diffusion across the cytoplasmic membrane via a pore-type mechanism. The chain is Glycerol uptake facilitator protein (glpF) from Pseudomonas aeruginosa (strain ATCC 15692 / DSM 22644 / CIP 104116 / JCM 14847 / LMG 12228 / 1C / PRS 101 / PAO1).